A 185-amino-acid polypeptide reads, in one-letter code: Ribosome-recycling factor (185 aa).

The protein belongs to the RRF family.

It localises to the cytoplasm. Responsible for the release of ribosomes from messenger RNA at the termination of protein biosynthesis. May increase the efficiency of translation by recycling ribosomes from one round of translation to another. This is Ribosome-recycling factor from Streptococcus uberis (strain ATCC BAA-854 / 0140J).